Reading from the N-terminus, the 341-residue chain is S-adenosylmethionine:tRNA ribosyltransferase-isomerase (341 aa).

Belongs to the QueA family. Monomer.

The protein localises to the cytoplasm. The catalysed reaction is 7-aminomethyl-7-carbaguanosine(34) in tRNA + S-adenosyl-L-methionine = epoxyqueuosine(34) in tRNA + adenine + L-methionine + 2 H(+). The protein operates within tRNA modification; tRNA-queuosine biosynthesis. Its function is as follows. Transfers and isomerizes the ribose moiety from AdoMet to the 7-aminomethyl group of 7-deazaguanine (preQ1-tRNA) to give epoxyqueuosine (oQ-tRNA). The polypeptide is S-adenosylmethionine:tRNA ribosyltransferase-isomerase (Trichlorobacter lovleyi (strain ATCC BAA-1151 / DSM 17278 / SZ) (Geobacter lovleyi)).